Here is a 285-residue protein sequence, read N- to C-terminus: ATP phosphoribosyltransferase (285 aa).

It belongs to the ATP phosphoribosyltransferase family. Long subfamily. Mg(2+) serves as cofactor.

It localises to the cytoplasm. The enzyme catalyses 1-(5-phospho-beta-D-ribosyl)-ATP + diphosphate = 5-phospho-alpha-D-ribose 1-diphosphate + ATP. It functions in the pathway amino-acid biosynthesis; L-histidine biosynthesis; L-histidine from 5-phospho-alpha-D-ribose 1-diphosphate: step 1/9. With respect to regulation, feedback inhibited by histidine. Functionally, catalyzes the condensation of ATP and 5-phosphoribose 1-diphosphate to form N'-(5'-phosphoribosyl)-ATP (PR-ATP). Has a crucial role in the pathway because the rate of histidine biosynthesis seems to be controlled primarily by regulation of HisG enzymatic activity. The chain is ATP phosphoribosyltransferase from Sulfurisphaera tokodaii (strain DSM 16993 / JCM 10545 / NBRC 100140 / 7) (Sulfolobus tokodaii).